Here is a 104-residue protein sequence, read N- to C-terminus: UPF0213 protein YsiG (104 aa).

The GIY-YIG domain occupies 2–79 (NQYFTYILQC…KLVRKQKLSL (78 aa)).

Belongs to the UPF0213 family.

This Lactococcus lactis subsp. lactis (strain IL1403) (Streptococcus lactis) protein is UPF0213 protein YsiG (ysiG).